The chain runs to 369 residues: Phospho-N-acetylmuramoyl-pentapeptide-transferase (369 aa).

10 helical membrane-spanning segments follow: residues 30–50, 74–94, 97–117, 136–156, 177–197, 208–228, 244–264, 272–292, 297–317, and 346–366; these read LAIF…IRWM, GTPT…TLLW, LSNP…LLGF, IRLA…IVFA, YFVD…VGAA, GLAT…AYLV, GVGE…GFLW, IFMG…VAVA, IVLA…IIQV, and TVVI…LATL.

This sequence belongs to the glycosyltransferase 4 family. MraY subfamily. Mg(2+) serves as cofactor.

Its subcellular location is the cell inner membrane. The enzyme catalyses UDP-N-acetyl-alpha-D-muramoyl-L-alanyl-gamma-D-glutamyl-meso-2,6-diaminopimeloyl-D-alanyl-D-alanine + di-trans,octa-cis-undecaprenyl phosphate = di-trans,octa-cis-undecaprenyl diphospho-N-acetyl-alpha-D-muramoyl-L-alanyl-D-glutamyl-meso-2,6-diaminopimeloyl-D-alanyl-D-alanine + UMP. It participates in cell wall biogenesis; peptidoglycan biosynthesis. Its function is as follows. Catalyzes the initial step of the lipid cycle reactions in the biosynthesis of the cell wall peptidoglycan: transfers peptidoglycan precursor phospho-MurNAc-pentapeptide from UDP-MurNAc-pentapeptide onto the lipid carrier undecaprenyl phosphate, yielding undecaprenyl-pyrophosphoryl-MurNAc-pentapeptide, known as lipid I. The polypeptide is Phospho-N-acetylmuramoyl-pentapeptide-transferase (Phenylobacterium zucineum (strain HLK1)).